The chain runs to 303 residues: Protein REVEILLE 5 (303 aa).

One can recognise an HTH myb-type domain in the interval 54 to 108 (TIKKSRENWTDQEHDKFLEALHLFDRDWKKIEAFVGSKTVVQIRSHAQKYFLKVQ). A DNA-binding region (H-T-H motif) is located at residues 81–104 (WKKIEAFVGSKTVVQIRSHAQKYF). Residues 109–130 (KSGANEHLPPPRPKRKASHPYP) are disordered.

The protein resides in the nucleus. Functionally, probable transcription factor. The polypeptide is Protein REVEILLE 5 (RVE5) (Arabidopsis thaliana (Mouse-ear cress)).